Here is a 355-residue protein sequence, read N- to C-terminus: CX3C chemokine receptor 1 (355 aa).

The Extracellular segment spans residues Met-1 to Thr-31. The chain crosses the membrane as a helical span at residues Val-32–Ser-59. Residues Lys-60–Tyr-69 are Cytoplasmic-facing. The helical transmembrane segment at Leu-70 to Tyr-90 threads the bilayer. Over Leu-91 to Lys-103 the chain is Extracellular. Cys-102 and Cys-175 are oxidised to a cystine. The helical transmembrane segment at Phe-104–Ile-125 threads the bilayer. Residues Asp-126–Thr-142 lie on the Cytoplasmic side of the membrane. The helical transmembrane segment at Val-143–Phe-167 threads the bilayer. The Extracellular portion of the chain corresponds to Thr-168 to Thr-195. Residues Asn-196–Ile-215 traverse the membrane as a helical segment. At Gln-216 to Lys-231 the chain is on the cytoplasmic side. Residues Leu-232–Leu-256 form a helical membrane-spanning segment. At Lys-257 to Leu-273 the chain is on the extracellular side. The chain crosses the membrane as a helical span at residues Ala-274–Gly-297. Residues Glu-298–Leu-355 are Cytoplasmic-facing. At Thr-346 the chain carries Phosphothreonine.

It belongs to the G-protein coupled receptor 1 family. In terms of assembly, found in a ternary complex with CX3CL1 and ITGAV:ITGB3 or ITGA4:ITGB1. (Microbial infection) Interacts with human respiratory syncytial virus (HRSV) protein G; this interaction modulates host immune response. As to quaternary structure, (Microbial infection) Interacts with HIV-1 envelope polyprotein gp160. This protein is not N-glycosylated which is unusual for G-protein-coupled receptors. Expressed in lymphoid and neural tissues. Expressed in lymphocyte subsets, such as natural killer (NK) cells, gamma-delta T-cells and terminally differentiated CD8(+) T-cells. Expressed in smooth muscle cells in atherosclerotic plaques.

The protein localises to the cell membrane. In terms of biological role, receptor for the C-X3-C chemokine fractalkine (CX3CL1) present on many early leukocyte cells; CX3CR1-CX3CL1 signaling exerts distinct functions in different tissue compartments, such as immune response, inflammation, cell adhesion and chemotaxis. CX3CR1-CX3CL1 signaling mediates cell migratory functions. Responsible for the recruitment of natural killer (NK) cells to inflamed tissues. Acts as a regulator of inflammation process leading to atherogenesis by mediating macrophage and monocyte recruitment to inflamed atherosclerotic plaques, promoting cell survival. Involved in airway inflammation by promoting interleukin 2-producing T helper (Th2) cell survival in inflamed lung. Involved in the migration of circulating monocytes to non-inflamed tissues, where they differentiate into macrophages and dendritic cells. Acts as a negative regulator of angiogenesis, probably by promoting macrophage chemotaxis. Plays a key role in brain microglia by regulating inflammatory response in the central nervous system (CNS) and regulating synapse maturation. Required to restrain the microglial inflammatory response in the CNS and the resulting parenchymal damage in response to pathological stimuli. Involved in brain development by participating in synaptic pruning, a natural process during which brain microglia eliminates extra synapses during postnatal development. Synaptic pruning by microglia is required to promote the maturation of circuit connectivity during brain development. Acts as an important regulator of the gut microbiota by controlling immunity to intestinal bacteria and fungi. Expressed in lamina propria dendritic cells in the small intestine, which form transepithelial dendrites capable of taking up bacteria in order to provide defense against pathogenic bacteria. Required to initiate innate and adaptive immune responses against dissemination of commensal fungi (mycobiota) component of the gut: expressed in mononuclear phagocytes (MNPs) and acts by promoting induction of antifungal IgG antibodies response to confer protection against disseminated C.albicans or C.auris infection. Also acts as a receptor for C-C motif chemokine CCL26, inducing cell chemotaxis. Functionally, (Microbial infection) Acts as a coreceptor with CD4 for HIV-1 virus envelope protein. (Microbial infection) Acts as a coreceptor with CD4 for HIV-1 virus envelope protein. May have more potent HIV-1 coreceptothr activity than isoform 1. Its function is as follows. (Microbial infection) Acts as a coreceptor with CD4 for HIV-1 virus envelope protein. May have more potent HIV-1 coreceptor activity than isoform 1. In Homo sapiens (Human), this protein is CX3C chemokine receptor 1.